The following is a 448-amino-acid chain: Fumarate hydratase class II (448 aa).

Residues 83-85 (SGT), 113-116 (HPND), 123-125 (SSN), and Thr-171 each bind substrate. Catalysis depends on His-172, which acts as the Proton donor/acceptor. The active site involves Ser-302. Substrate-binding positions include Ser-303 and 308 to 310 (KVN).

Belongs to the class-II fumarase/aspartase family. Fumarase subfamily. As to quaternary structure, homotetramer.

The protein resides in the cytoplasm. It carries out the reaction (S)-malate = fumarate + H2O. It functions in the pathway carbohydrate metabolism; tricarboxylic acid cycle; (S)-malate from fumarate: step 1/1. Involved in the TCA cycle. Catalyzes the stereospecific interconversion of fumarate to L-malate. The sequence is that of Fumarate hydratase class II from Blochmanniella floridana.